Consider the following 175-residue polypeptide: Hypoxanthine-guanine phosphoribosyltransferase (175 aa).

Lys40 and Gly41 together coordinate diphosphate. Mg(2+) is bound by residues Glu96 and Asp97. Asp100 functions as the Proton acceptor in the catalytic mechanism. GMP contacts are provided by residues Lys128, 149 to 150 (FL), and Asp156. Diphosphate is bound at residue Arg162.

It belongs to the purine/pyrimidine phosphoribosyltransferase family. Requires Mg(2+) as cofactor.

The protein localises to the cytoplasm. It catalyses the reaction IMP + diphosphate = hypoxanthine + 5-phospho-alpha-D-ribose 1-diphosphate. The catalysed reaction is GMP + diphosphate = guanine + 5-phospho-alpha-D-ribose 1-diphosphate. The protein operates within purine metabolism; IMP biosynthesis via salvage pathway; IMP from hypoxanthine: step 1/1. Its pathway is purine metabolism; GMP biosynthesis via salvage pathway; GMP from guanine: step 1/1. Functionally, purine salvage pathway enzyme that catalyzes the transfer of the ribosyl-5-phosphate group from 5-phospho-alpha-D-ribose 1-diphosphate (PRPP) to the N9 position of the 6-oxopurines hypoxanthine and guanine to form the corresponding ribonucleotides IMP (inosine 5'-monophosphate) and GMP (guanosine 5'-monophosphate), with the release of PPi. This is Hypoxanthine-guanine phosphoribosyltransferase (hpt) from Mycoplasma pneumoniae (strain ATCC 29342 / M129 / Subtype 1) (Mycoplasmoides pneumoniae).